We begin with the raw amino-acid sequence, 394 residues long: 1-deoxy-D-xylulose 5-phosphate reductoisomerase (394 aa).

7 residues coordinate NADPH: T12, G13, S14, I15, G38, N41, and N132. Residue K133 coordinates 1-deoxy-D-xylulose 5-phosphate. Residue E134 coordinates NADPH. Residue D156 coordinates Mn(2+). 1-deoxy-D-xylulose 5-phosphate is bound by residues S157, E158, S182, and H205. Position 158 (E158) interacts with Mn(2+). Residue G211 coordinates NADPH. Residues S218, N223, K224, and E227 each contribute to the 1-deoxy-D-xylulose 5-phosphate site. E227 is a binding site for Mn(2+).

This sequence belongs to the DXR family. Requires Mg(2+) as cofactor. Mn(2+) serves as cofactor.

It carries out the reaction 2-C-methyl-D-erythritol 4-phosphate + NADP(+) = 1-deoxy-D-xylulose 5-phosphate + NADPH + H(+). The protein operates within isoprenoid biosynthesis; isopentenyl diphosphate biosynthesis via DXP pathway; isopentenyl diphosphate from 1-deoxy-D-xylulose 5-phosphate: step 1/6. In terms of biological role, catalyzes the NADPH-dependent rearrangement and reduction of 1-deoxy-D-xylulose-5-phosphate (DXP) to 2-C-methyl-D-erythritol 4-phosphate (MEP). This Paenarthrobacter aurescens (strain TC1) protein is 1-deoxy-D-xylulose 5-phosphate reductoisomerase.